The sequence spans 1564 residues: Nucleoporin nup184 (1564 aa).

The protein localises to the nucleus. Its subcellular location is the nuclear pore complex. Functionally, interacts with pom152 in the core structure of the nuclear pore complex (NPC). Involved in the export of mRNA. This is Nucleoporin nup184 (nup184) from Schizosaccharomyces pombe (strain 972 / ATCC 24843) (Fission yeast).